We begin with the raw amino-acid sequence, 143 residues long: Competence protein ComGD (143 aa).

Residues Met-1–Gly-10 constitute a propeptide that is removed on maturation. Position 11 is an N-methylphenylalanine (Phe-11). The helical transmembrane segment at Phe-11 to Phe-31 threads the bilayer.

The transformation pili are flexible filaments, consisting mainly of the major pilin ComGC and smaller amounts of the minor pilins, including at least ComGD, ComGF and ComGG. Interacts with ComGF. Interacts with ComGG. In terms of processing, processing of ComGD in competent cells requires ComC.

It is found in the cell membrane. Its subcellular location is the cell surface. In terms of biological role, required for formation of the type IV-like pilus (T4P) that plays a role in transformation. Transformation pili are dynamically extended and retracted, perhaps thereby promoting DNA uptake and transformation. Required for transformation and DNA binding. This Bacillus subtilis (strain 168) protein is Competence protein ComGD (comGD).